The following is a 215-amino-acid chain: Probable nicotinate-nucleotide adenylyltransferase (215 aa).

The protein belongs to the NadD family.

It carries out the reaction nicotinate beta-D-ribonucleotide + ATP + H(+) = deamido-NAD(+) + diphosphate. It functions in the pathway cofactor biosynthesis; NAD(+) biosynthesis; deamido-NAD(+) from nicotinate D-ribonucleotide: step 1/1. In terms of biological role, catalyzes the reversible adenylation of nicotinate mononucleotide (NaMN) to nicotinic acid adenine dinucleotide (NaAD). The polypeptide is Probable nicotinate-nucleotide adenylyltransferase (Shewanella putrefaciens (strain CN-32 / ATCC BAA-453)).